Consider the following 440-residue polypeptide: Xylose isomerase (440 aa).

Active-site residues include His99 and Asp102. Mg(2+) is bound by residues Glu230, Glu266, His269, Asp294, Asp305, Asp307, and Asp337.

This sequence belongs to the xylose isomerase family. Homotetramer. Mg(2+) is required as a cofactor.

It is found in the cytoplasm. The catalysed reaction is alpha-D-xylose = alpha-D-xylulofuranose. In Halalkalibacterium halodurans (strain ATCC BAA-125 / DSM 18197 / FERM 7344 / JCM 9153 / C-125) (Bacillus halodurans), this protein is Xylose isomerase.